A 477-amino-acid chain; its full sequence is Aspartyl/glutamyl-tRNA(Asn/Gln) amidotransferase subunit B (477 aa).

The protein belongs to the GatB/GatE family. GatB subfamily. As to quaternary structure, heterotrimer of A, B and C subunits.

The catalysed reaction is L-glutamyl-tRNA(Gln) + L-glutamine + ATP + H2O = L-glutaminyl-tRNA(Gln) + L-glutamate + ADP + phosphate + H(+). It catalyses the reaction L-aspartyl-tRNA(Asn) + L-glutamine + ATP + H2O = L-asparaginyl-tRNA(Asn) + L-glutamate + ADP + phosphate + 2 H(+). Allows the formation of correctly charged Asn-tRNA(Asn) or Gln-tRNA(Gln) through the transamidation of misacylated Asp-tRNA(Asn) or Glu-tRNA(Gln) in organisms which lack either or both of asparaginyl-tRNA or glutaminyl-tRNA synthetases. The reaction takes place in the presence of glutamine and ATP through an activated phospho-Asp-tRNA(Asn) or phospho-Glu-tRNA(Gln). The sequence is that of Aspartyl/glutamyl-tRNA(Asn/Gln) amidotransferase subunit B from Sulfurovum sp. (strain NBC37-1).